Reading from the N-terminus, the 311-residue chain is Methionyl-tRNA formyltransferase (311 aa).

S110 to P113 contributes to the (6S)-5,6,7,8-tetrahydrofolate binding site.

Belongs to the Fmt family.

It catalyses the reaction L-methionyl-tRNA(fMet) + (6R)-10-formyltetrahydrofolate = N-formyl-L-methionyl-tRNA(fMet) + (6S)-5,6,7,8-tetrahydrofolate + H(+). Functionally, attaches a formyl group to the free amino group of methionyl-tRNA(fMet). The formyl group appears to play a dual role in the initiator identity of N-formylmethionyl-tRNA by promoting its recognition by IF2 and preventing the misappropriation of this tRNA by the elongation apparatus. The sequence is that of Methionyl-tRNA formyltransferase from Streptococcus equi subsp. equi (strain 4047).